The chain runs to 245 residues: E3 ubiquitin-protein ligase RNF138 (245 aa).

The RING-type zinc finger occupies 18-58; sequence CPVCQEVLKTPVRTAACQHVFCRKCFLTAMRESGIHCPLCR. Zn(2+) contacts are provided by cysteine 86, cysteine 89, histidine 101, and cysteine 105. Residues 86-105 form a C2HC RNF-type zinc finger; the sequence is CRCCSKKIKFYRMRHHYKSC. The interval 128-154 is disordered; sequence VRSSNRSETSASDNTETYQEDTSSSGH. Threonine 142 carries the post-translational modification Phosphothreonine. 2 C2H2-type zinc fingers span residues 157–180 and 187–215; these read FKCP…NSNH and VTCP…NQRH. Residues 225-243 form the UIM domain; the sequence is LQLDEETQYQTAVEESFQV.

As to quaternary structure, interacts with NLK. Interacts with XRCC5/Ku80. Interacts with RBBP8/CtIP. Post-translationally, auto-ubiquitinated.

The protein localises to the chromosome. It carries out the reaction S-ubiquitinyl-[E2 ubiquitin-conjugating enzyme]-L-cysteine + [acceptor protein]-L-lysine = [E2 ubiquitin-conjugating enzyme]-L-cysteine + N(6)-ubiquitinyl-[acceptor protein]-L-lysine.. The protein operates within protein modification; protein ubiquitination. E3 ubiquitin-protein ligase involved in DNA damage response by promoting DNA resection and homologous recombination. Recruited to sites of double-strand breaks following DNA damage and specifically promotes double-strand break repair via homologous recombination. Two different, non-exclusive, mechanisms have been proposed. According to a report, regulates the choice of double-strand break repair by favoring homologous recombination over non-homologous end joining (NHEJ): acts by mediating ubiquitination of XRCC5/Ku80, leading to remove the Ku complex from DNA breaks, thereby promoting homologous recombination. According to another report, cooperates with UBE2Ds E2 ubiquitin ligases (UBE2D1, UBE2D2, UBE2D3 or UBE2D4) to promote homologous recombination by mediating ubiquitination of RBBP8/CtIP. Together with NLK, involved in the ubiquitination and degradation of TCF/LEF. Also exhibits auto-ubiquitination activity in combination with UBE2K. May act as a negative regulator in the Wnt/beta-catenin-mediated signaling pathway. The chain is E3 ubiquitin-protein ligase RNF138 from Mus musculus (Mouse).